A 1219-amino-acid chain; its full sequence is Pleckstrin homology domain-containing family G member 3 (1219 aa).

Over residues 1-10 (MPVSTSLHQD) the composition is skewed to polar residues. The disordered stretch occupies residues 1–66 (MPVSTSLHQD…HLPNSNNNSS (66 aa)). Low complexity predominate over residues 18-46 (SLTSTTSSSGSSCDSRSAMEEPSSSEAPA). A Phosphoserine modification is found at Ser-76. The DH domain maps to 93–272 (YLGRVVREIV…TCVAWYINDM (180 aa)). A PH domain is found at 296–394 (DLTTYGELVL…WTHHIKRLIL (99 aa)). Over residues 431-442 (WSSQDEVSTNVR) the composition is skewed to polar residues. 2 disordered regions span residues 431-599 (WSSQ…PSVL) and 613-708 (FSRR…KESA). Residue Ser-433 is modified to Phosphoserine. A compositionally biased stretch (basic and acidic residues) spans 446–463 (RQSEPTKHLLRQLNEKAR). Ser-576, Ser-577, Ser-618, Ser-631, Ser-640, Ser-643, and Ser-647 each carry phosphoserine. The span at 630 to 645 (GSPRLVSRSSSVLSLE) shows a compositional bias: low complexity. Residues 696–708 (EPDRSSCKKKESA) are compositionally biased toward basic and acidic residues. A phosphoserine mark is found at Ser-741, Ser-779, and Ser-827. 5 disordered regions span residues 756 to 780 (RFNSLPRPDPEPVPPVGSKRQVGSR), 821 to 840 (MESSGGSPGKGPGQGQANGF), 859 to 878 (EESATASPESSSPTEGRSPA), 955 to 1133 (APER…LYVT), and 1146 to 1207 (VMEK…RVRN). Residues 826 to 836 (GSPGKGPGQGQ) are compositionally biased toward gly residues. Positions 859–873 (EESATASPESSSPTE) are enriched in low complexity. Phosphoserine occurs at positions 962, 1011, 1023, 1037, and 1040. The span at 1020 to 1029 (SAVSQRTTSP) shows a compositional bias: polar residues. Positions 1049–1065 (DVRELCSKYASRDEARR) are enriched in basic and acidic residues. A Phosphoserine modification is found at Ser-1081. The residue at position 1107 (Arg-1107) is an Omega-N-methylarginine. The segment covering 1187 to 1197 (QPKEEGSRDPA) has biased composition (basic and acidic residues).

It is found in the cytoplasm. The protein resides in the cytoskeleton. In terms of biological role, plays a role in controlling cell polarity and cell motility by selectively binding newly polymerized actin and activating RAC1 and CDC42 to enhance local actin polymerization. In Homo sapiens (Human), this protein is Pleckstrin homology domain-containing family G member 3.